The sequence spans 343 residues: Glyceraldehyde-3-phosphate dehydrogenase (343 aa).

NAD(+)-binding positions include 12-13 and glycine 114; that span reads SI. 143–145 lines the D-glyceraldehyde 3-phosphate pocket; sequence SCN. The active-site Nucleophile is the cysteine 144. Arginine 172 is a binding site for NAD(+). Residue 198 to 199 coordinates D-glyceraldehyde 3-phosphate; it reads HG. NAD(+) is bound at residue glutamine 307.

The protein belongs to the glyceraldehyde-3-phosphate dehydrogenase family. Homotetramer.

It localises to the cytoplasm. It catalyses the reaction D-glyceraldehyde 3-phosphate + phosphate + NADP(+) = (2R)-3-phospho-glyceroyl phosphate + NADPH + H(+). It carries out the reaction D-glyceraldehyde 3-phosphate + phosphate + NAD(+) = (2R)-3-phospho-glyceroyl phosphate + NADH + H(+). It participates in carbohydrate degradation; glycolysis; pyruvate from D-glyceraldehyde 3-phosphate: step 1/5. The sequence is that of Glyceraldehyde-3-phosphate dehydrogenase (gap) from Methanocaldococcus jannaschii (strain ATCC 43067 / DSM 2661 / JAL-1 / JCM 10045 / NBRC 100440) (Methanococcus jannaschii).